The primary structure comprises 764 residues: 1,4-alpha-glucan branching enzyme GlgB (764 aa).

Catalysis depends on Asp-434, which acts as the Nucleophile. The Proton donor role is filled by Glu-487.

It belongs to the glycosyl hydrolase 13 family. GlgB subfamily. In terms of assembly, monomer.

The catalysed reaction is Transfers a segment of a (1-&gt;4)-alpha-D-glucan chain to a primary hydroxy group in a similar glucan chain.. The protein operates within glycan biosynthesis; glycogen biosynthesis. In terms of biological role, catalyzes the formation of the alpha-1,6-glucosidic linkages in glycogen by scission of a 1,4-alpha-linked oligosaccharide from growing alpha-1,4-glucan chains and the subsequent attachment of the oligosaccharide to the alpha-1,6 position. This Nostoc sp. (strain PCC 7120 / SAG 25.82 / UTEX 2576) protein is 1,4-alpha-glucan branching enzyme GlgB.